The following is a 116-amino-acid chain: MNLDRLTELRKKKNWSLQYTADLLGIAKSTYAGYESGYRRPSLEALAMLADLFDTTCDELLGREKQKQTAPQAIELATWSSLDFTISVDGQPLSEDEIIQLITFIRTKRKVQEELS.

An HTH cro/C1-type domain is found at 6 to 60 (LTELRKKKNWSLQYTADLLGIAKSTYAGYESGYRRPSLEALAMLADLFDTTCDEL). Positions 17–36 (LQYTADLLGIAKSTYAGYES) form a DNA-binding region, H-T-H motif.

Functionally, transcriptional repressor for the ans operon coding for L-asparaginase and L-aspartase. NH4(+) may influence this repression. This is HTH-type transcriptional regulator AnsR (ansR) from Bacillus subtilis (strain 168).